A 246-amino-acid chain; its full sequence is Adenosylcobinamide-GDP ribazoletransferase (246 aa).

Transmembrane regions (helical) follow at residues 37 to 57 (FPAV…AGAL), 64 to 84 (ALAA…DGLA), 100 to 122 (LLAV…LQLL), 139 to 159 (ALVL…WWLM), 185 to 205 (LAAA…VLWW), and 223 to 243 (AGIE…GLWI).

Belongs to the CobS family. Mg(2+) serves as cofactor.

Its subcellular location is the cell inner membrane. The catalysed reaction is alpha-ribazole + adenosylcob(III)inamide-GDP = adenosylcob(III)alamin + GMP + H(+). It catalyses the reaction alpha-ribazole 5'-phosphate + adenosylcob(III)inamide-GDP = adenosylcob(III)alamin 5'-phosphate + GMP + H(+). It participates in cofactor biosynthesis; adenosylcobalamin biosynthesis; adenosylcobalamin from cob(II)yrinate a,c-diamide: step 7/7. Functionally, joins adenosylcobinamide-GDP and alpha-ribazole to generate adenosylcobalamin (Ado-cobalamin). Also synthesizes adenosylcobalamin 5'-phosphate from adenosylcobinamide-GDP and alpha-ribazole 5'-phosphate. This chain is Adenosylcobinamide-GDP ribazoletransferase, found in Novosphingobium aromaticivorans (strain ATCC 700278 / DSM 12444 / CCUG 56034 / CIP 105152 / NBRC 16084 / F199).